The following is a 654-amino-acid chain: Pyoverdine export ATP-binding/permease protein PvdT (654 aa).

The 240-residue stretch at 6 to 245 folds into the ABC transporter domain; sequence IELCDIRKAY…QPEQLQANDL (240 aa). ATP is bound at residue 43–50; that stretch reads GASGSGKS. The next 4 membrane-spanning stretches (helical) occupy residues 282–302, 529–549, 596–616, and 617–637; these read ALTL…LAVG, LSLM…IGVM, IVIA…VAFA, and LPAI…FGFM.

This sequence belongs to the ABC transporter superfamily. Macrolide exporter (TC 3.A.1.122) family. As to quaternary structure, part of the tripartite efflux system PvdRT-OpmQ, which is composed of an inner membrane component with both ATPase and permease domains, PvdT, a periplasmic membrane fusion protein, PvdR, and an outer membrane component, OpmQ.

Its subcellular location is the cell inner membrane. Its function is as follows. Part of the tripartite efflux system PvdRT-OpmQ required for the secretion into the extracellular milieu of the siderophore pyoverdine (PVD), which is involved in iron acquisition. This subunit binds PVD and drives its secretion by hydrolyzing ATP. The system is responsible for export of newly synthesized PVD after the final steps of biosynthesis have taken place in the periplasm. It is also responsible for recycling of PVD after internalization of ferri-PVD into the periplasm by the outer-membrane receptor FpvA and release of iron from PVD, thus making PVD available for new cycles of iron uptake. This is Pyoverdine export ATP-binding/permease protein PvdT from Pseudomonas entomophila (strain L48).